A 326-amino-acid chain; its full sequence is MFFDREKELEELTDLVSSKPSMITFTYGPINSGKTTLLIEFSKRLPREYIVFNINLRGRFIREEKDFIKVLFMKKEESESIKNSYKGIPIPEGILNEILENPFLFLEEYFEEINNSGRIPVLILDELQVIGDLRIDDLLIYKLFNFFVRLTKELHLAHVFVATSDSLFLERVHGEAMLHGRSRFMLVDDFDERTTLEFLTSNGLSEEEAKIAWHYLGGKPSYLVDLLQRSRIRVEDYCKEALKWRTSQILDSLYTLKGRKLRKVIELLSKFRENDEITYGPLSEEIVWSVRNNILFADPRERKLRPQGRLEKHAIELALEKLRNNF.

28-35 lines the ATP pocket; it reads GPINSGKT.

Belongs to the archaeal ATPase family.

This is an uncharacterized protein from Pyrococcus abyssi (strain GE5 / Orsay).